The primary structure comprises 621 residues: C4-dicarboxylate transport sensor protein DctB (621 aa).

Topologically, residues 1-26 (MHHVRMVKLPAEASDPHALRSRARRS) are cytoplasmic. A helical membrane pass occupies residues 27 to 45 (WLVFAAVALVLLAAGLLLA). At 46–320 (RDYGRSQALA…PLAAGAREAQ (275 aa)) the chain is on the periplasmic side. Residues 321 to 338 (LLTLAALVPLLALAALLL) form a helical membrane-spanning segment. The Cytoplasmic segment spans residues 339 to 621 (RRRQVVAMRS…TTFAVNLKKA (283 aa)). Residues 412–621 (GVAHEINQPV…TTFAVNLKKA (210 aa)) enclose the Histidine kinase domain. His415 carries the phosphohistidine; by autocatalysis modification.

Autophosphorylated.

The protein localises to the cell inner membrane. It carries out the reaction ATP + protein L-histidine = ADP + protein N-phospho-L-histidine.. Functionally, member of the two-component regulatory system DctB/DctD involved in the transport of C4-dicarboxylates. DctB functions as a membrane-associated protein kinase that phosphorylates DctD in response to environmental signals. This chain is C4-dicarboxylate transport sensor protein DctB (dctB), found in Rhizobium meliloti (strain 1021) (Ensifer meliloti).